The chain runs to 563 residues: 2-isopropylmalate synthase (563 aa).

The region spanning P31–N305 is the Pyruvate carboxyltransferase domain. D40, H244, H246, and N280 together coordinate Mg(2+). A regulatory domain region spans residues R437–E563.

This sequence belongs to the alpha-IPM synthase/homocitrate synthase family. LeuA type 2 subfamily. As to quaternary structure, homodimer. It depends on Mg(2+) as a cofactor.

Its subcellular location is the cytoplasm. It carries out the reaction 3-methyl-2-oxobutanoate + acetyl-CoA + H2O = (2S)-2-isopropylmalate + CoA + H(+). It functions in the pathway amino-acid biosynthesis; L-leucine biosynthesis; L-leucine from 3-methyl-2-oxobutanoate: step 1/4. Functionally, catalyzes the condensation of the acetyl group of acetyl-CoA with 3-methyl-2-oxobutanoate (2-ketoisovalerate) to form 3-carboxy-3-hydroxy-4-methylpentanoate (2-isopropylmalate). In Parvibaculum lavamentivorans (strain DS-1 / DSM 13023 / NCIMB 13966), this protein is 2-isopropylmalate synthase.